The sequence spans 277 residues: Hematopoietically-expressed homeobox protein HHEX (277 aa).

2 disordered regions span residues 47–69 (AAPAPHSLPAPPPPTLPSPNSSF) and 199–277 (WRRL…SATR). Over residues 52-63 (HSLPAPPPPTLP) the composition is skewed to pro residues. Positions 144–203 (RKGGQVRFSNEQTIELEKKFETQKYLSPPERKRLAKLLQLSERQVKTWFQNRRAKWRRLK) form a DNA-binding region, homeobox. The span at 210–226 (TKKEEAEGTGDHGDPRS) shows a compositional bias: basic and acidic residues. Positions 250–266 (EDPESDVSDDSDQEVDI) are enriched in acidic residues.

As to expression, in all hematopoietic tissues except peripheral blood erythrocytes and in the liver and lung.

The protein resides in the nucleus. Functionally, recognizes the DNA sequence 5'-ATTAA-3'. Transcriptional repressor. May play a role in hematopoietic differentiation. This Gallus gallus (Chicken) protein is Hematopoietically-expressed homeobox protein HHEX (HHEX).